A 314-amino-acid polypeptide reads, in one-letter code: tRNA pseudouridine synthase B (314 aa).

H43 provides a ligand contact to substrate. The Nucleophile role is filled by D48. Substrate contacts are provided by Y76, Y179, and L200.

It belongs to the pseudouridine synthase TruB family. Type 1 subfamily.

The enzyme catalyses uridine(55) in tRNA = pseudouridine(55) in tRNA. Responsible for synthesis of pseudouridine from uracil-55 in the psi GC loop of transfer RNAs. This chain is tRNA pseudouridine synthase B, found in Salmonella arizonae (strain ATCC BAA-731 / CDC346-86 / RSK2980).